Consider the following 187-residue polypeptide: Shikimate kinase (187 aa).

Position 14–19 (14–19 (GSGKST)) interacts with ATP. Serine 18 provides a ligand contact to Mg(2+). Substrate is bound by residues aspartate 36, arginine 60, and glycine 82. An ATP-binding site is contributed by arginine 120. Arginine 147 contributes to the substrate binding site.

It belongs to the shikimate kinase family. In terms of assembly, monomer. Mg(2+) is required as a cofactor.

The protein localises to the cytoplasm. The catalysed reaction is shikimate + ATP = 3-phosphoshikimate + ADP + H(+). The protein operates within metabolic intermediate biosynthesis; chorismate biosynthesis; chorismate from D-erythrose 4-phosphate and phosphoenolpyruvate: step 5/7. Functionally, catalyzes the specific phosphorylation of the 3-hydroxyl group of shikimic acid using ATP as a cosubstrate. The protein is Shikimate kinase of Chlorobaculum parvum (strain DSM 263 / NCIMB 8327) (Chlorobium vibrioforme subsp. thiosulfatophilum).